The following is a 475-amino-acid chain: 1,3-beta-glucanosyltransferase gel2 (475 aa).

The first 21 residues, 1–21, serve as a signal peptide directing secretion; sequence MLPTYVRLFTAVCALATTASA. Cys-69 and Cys-98 are oxidised to a cystine. (1,3-beta-D-glucosyl)n-binding residues include Tyr-87, Asn-159, Glu-160, and Asp-201. Catalysis depends on Glu-160, which acts as the Proton donor. Intrachain disulfides connect Cys-215/Cys-350 and Cys-234/Cys-265. Residue Asn-236 is glycosylated (N-linked (GlcNAc...) asparagine). The Nucleophile role is filled by Glu-262. Residue Tyr-294 coordinates (1,3-beta-D-glucosyl)n. N-linked (GlcNAc...) asparagine glycans are attached at residues Asn-311, Asn-339, and Asn-357. The segment at 420 to 451 is disordered; sequence GESNTPGAHSSGSTSGSSSSGGSSSSSSDKES. Low complexity predominate over residues 429 to 446; that stretch reads SSGSTSGSSSSGGSSSSS. A lipid anchor (GPI-like-anchor amidated serine) is attached at Ser-451. Positions 452–475 are cleaved as a propeptide — removed in mature form; sequence AAGTISVPFVGLLSAASFMAFFML.

Belongs to the glycosyl hydrolase 72 family. Post-translationally, the GPI-like anchor contains a phosphoceramide lipid group.

It is found in the cell membrane. Its function is as follows. Splits internally a 1,3-beta-glucan molecule and transfers the newly generated reducing end (the donor) to the non-reducing end of another 1,3-beta-glucan molecule (the acceptor) forming a 1,3-beta linkage, resulting in the elongation of 1,3-beta-glucan chains in the cell wall. Involved in cell wall morphogenesis. The chain is 1,3-beta-glucanosyltransferase gel2 (gel2) from Aspergillus fumigatus (strain CBS 144.89 / FGSC A1163 / CEA10) (Neosartorya fumigata).